A 153-amino-acid chain; its full sequence is Pheromone-binding protein Gp-9 (153 aa).

A signal peptide spans 1-19 (MKTFVLHIFIFALVAFASA). 3 disulfide bridges follow: Cys-37-Cys-77, Cys-73-Cys-129, and Cys-118-Cys-138.

It belongs to the PBP/GOBP family. As to quaternary structure, homodimer.

It is found in the secreted. Functionally, colony queen number, a major feature of social organization, is associated with worker genotype for Gp-9. Colonies are headed by either a single reproductive queen (monogyne form) or multiple queens (polygyne form). Differences in worker Gp-9 genotypes between social forms may cause differences in workers' abilities to recognize queens and regulate their numbers. The polypeptide is Pheromone-binding protein Gp-9 (Solenopsis sp. (strain B0-153) (Fire ant)).